The following is a 143-amino-acid chain: Large ribosomal subunit protein uL11 (143 aa).

It belongs to the universal ribosomal protein uL11 family. As to quaternary structure, part of the ribosomal stalk of the 50S ribosomal subunit. Interacts with L10 and the large rRNA to form the base of the stalk. L10 forms an elongated spine to which L12 dimers bind in a sequential fashion forming a multimeric L10(L12)X complex. One or more lysine residues are methylated.

Its function is as follows. Forms part of the ribosomal stalk which helps the ribosome interact with GTP-bound translation factors. In Pseudomonas fluorescens (strain Pf0-1), this protein is Large ribosomal subunit protein uL11.